We begin with the raw amino-acid sequence, 212 residues long: Pyridoxine/pyridoxamine 5'-phosphate oxidase (212 aa).

Residues 57 to 62 (RMVLLK), 72 to 73 (YT), Arg-78, Lys-79, and Gln-101 contribute to the FMN site. Position 62 (Lys-62) interacts with substrate. Residues Tyr-119, Arg-123, and Ser-127 each contribute to the substrate site. FMN-binding positions include 136-137 (QS) and Trp-181. 187-189 (RLH) is a binding site for substrate. Position 191 (Arg-191) interacts with FMN.

The protein belongs to the pyridoxamine 5'-phosphate oxidase family. Homodimer. Requires FMN as cofactor.

It catalyses the reaction pyridoxamine 5'-phosphate + O2 + H2O = pyridoxal 5'-phosphate + H2O2 + NH4(+). The catalysed reaction is pyridoxine 5'-phosphate + O2 = pyridoxal 5'-phosphate + H2O2. Its pathway is cofactor metabolism; pyridoxal 5'-phosphate salvage; pyridoxal 5'-phosphate from pyridoxamine 5'-phosphate: step 1/1. The protein operates within cofactor metabolism; pyridoxal 5'-phosphate salvage; pyridoxal 5'-phosphate from pyridoxine 5'-phosphate: step 1/1. Its function is as follows. Catalyzes the oxidation of either pyridoxine 5'-phosphate (PNP) or pyridoxamine 5'-phosphate (PMP) into pyridoxal 5'-phosphate (PLP). In Erythrobacter litoralis (strain HTCC2594), this protein is Pyridoxine/pyridoxamine 5'-phosphate oxidase.